An 81-amino-acid polypeptide reads, in one-letter code: uncharacterized protein (81 aa).

The signal sequence occupies residues 1 to 22 (MNKKLSIIFLIFALIASVLCSA). Residues 29-81 (HSSSTTTTTSSSGGTSGTDSSINTGSSYSGSGSGSGSTGGSGSGSGSGTAKWK) are disordered. Positions 30–58 (SSSTTTTTSSSGGTSGTDSSINTGSSYSG) are enriched in low complexity. Over residues 59-75 (SGSGSGSTGGSGSGSGS) the composition is skewed to gly residues.

It is found in the secreted. This is an uncharacterized protein from Dictyostelium discoideum (Social amoeba).